Reading from the N-terminus, the 255-residue chain is Probable ubiquitin carboxyl-terminal hydrolase (255 aa).

Residues 13 to 237 (NWIPLEANPE…IRFNLMGLVK (225 aa)) form the UCH catalytic domain. The tract at residues 16–21 (PLEANP) is interaction with ubiquitin. Cys-103 (nucleophile) is an active-site residue. Residue His-177 is the Proton donor of the active site. The interval 227–232 (EIRFNL) is interaction with ubiquitin. Positions 235–255 (LVKKPNEESEEEEEKEKEETK) are disordered. The segment covering 242 to 255 (ESEEEEEKEKEETK) has biased composition (acidic residues).

The protein belongs to the peptidase C12 family.

The protein resides in the cytoplasm. The enzyme catalyses Thiol-dependent hydrolysis of ester, thioester, amide, peptide and isopeptide bonds formed by the C-terminal Gly of ubiquitin (a 76-residue protein attached to proteins as an intracellular targeting signal).. Functionally, ubiquitin-protein hydrolase is involved both in the processing of ubiquitin precursors and of ubiquitinated proteins. This enzyme is a thiol protease that recognizes and hydrolyzes a peptide bond at the C-terminal glycine of either ubiquitin or nedd8. The chain is Probable ubiquitin carboxyl-terminal hydrolase (uch1) from Dictyostelium discoideum (Social amoeba).